Consider the following 267-residue polypeptide: 3-methyl-2-oxobutanoate hydroxymethyltransferase (267 aa).

Asp46 and Asp85 together coordinate Mg(2+). Residues 46–47 (DS), Asp85, and Lys115 contribute to the 3-methyl-2-oxobutanoate site. Position 117 (Glu117) interacts with Mg(2+). Catalysis depends on Glu184, which acts as the Proton acceptor.

This sequence belongs to the PanB family. In terms of assembly, homodecamer; pentamer of dimers. Mg(2+) serves as cofactor.

The protein resides in the cytoplasm. The enzyme catalyses 3-methyl-2-oxobutanoate + (6R)-5,10-methylene-5,6,7,8-tetrahydrofolate + H2O = 2-dehydropantoate + (6S)-5,6,7,8-tetrahydrofolate. It participates in cofactor biosynthesis; (R)-pantothenate biosynthesis; (R)-pantoate from 3-methyl-2-oxobutanoate: step 1/2. Functionally, catalyzes the reversible reaction in which hydroxymethyl group from 5,10-methylenetetrahydrofolate is transferred onto alpha-ketoisovalerate to form ketopantoate. This chain is 3-methyl-2-oxobutanoate hydroxymethyltransferase, found in Geobacter sulfurreducens (strain ATCC 51573 / DSM 12127 / PCA).